The chain runs to 189 residues: Elongation factor P (189 aa).

The protein belongs to the elongation factor P family.

Its subcellular location is the cytoplasm. It functions in the pathway protein biosynthesis; polypeptide chain elongation. Involved in peptide bond synthesis. Stimulates efficient translation and peptide-bond synthesis on native or reconstituted 70S ribosomes in vitro. Probably functions indirectly by altering the affinity of the ribosome for aminoacyl-tRNA, thus increasing their reactivity as acceptors for peptidyl transferase. The protein is Elongation factor P of Onion yellows phytoplasma (strain OY-M).